The sequence spans 337 residues: Inositol 2-dehydrogenase (337 aa).

It belongs to the Gfo/Idh/MocA family. Homotetramer.

It carries out the reaction myo-inositol + NAD(+) = scyllo-inosose + NADH + H(+). In terms of biological role, involved in the oxidation of myo-inositol (MI) to 2-keto-myo-inositol (2KMI or 2-inosose). The protein is Inositol 2-dehydrogenase of Serratia proteamaculans (strain 568).